Consider the following 197-residue polypeptide: Probable adenylyl-sulfate kinase (197 aa).

33-40 (GLSGSGKS) contributes to the ATP binding site. Ser107 acts as the Phosphoserine intermediate in catalysis.

The protein belongs to the APS kinase family.

It catalyses the reaction adenosine 5'-phosphosulfate + ATP = 3'-phosphoadenylyl sulfate + ADP + H(+). The protein operates within sulfur metabolism; hydrogen sulfide biosynthesis; sulfite from sulfate: step 2/3. Catalyzes the synthesis of activated sulfate. The sequence is that of Probable adenylyl-sulfate kinase (cysC) from Bacillus subtilis (strain 168).